The following is a 263-amino-acid chain: 3-methyl-2-oxobutanoate hydroxymethyltransferase (263 aa).

The Mg(2+) site is built by Asp-45 and Asp-84. Residues 45 to 46 (DS), Asp-84, and Lys-112 contribute to the 3-methyl-2-oxobutanoate site. Glu-114 lines the Mg(2+) pocket. The active-site Proton acceptor is the Glu-180.

Belongs to the PanB family. As to quaternary structure, homodecamer; pentamer of dimers. Requires Mg(2+) as cofactor.

It is found in the cytoplasm. It carries out the reaction 3-methyl-2-oxobutanoate + (6R)-5,10-methylene-5,6,7,8-tetrahydrofolate + H2O = 2-dehydropantoate + (6S)-5,6,7,8-tetrahydrofolate. It functions in the pathway cofactor biosynthesis; (R)-pantothenate biosynthesis; (R)-pantoate from 3-methyl-2-oxobutanoate: step 1/2. Catalyzes the reversible reaction in which hydroxymethyl group from 5,10-methylenetetrahydrofolate is transferred onto alpha-ketoisovalerate to form ketopantoate. This is 3-methyl-2-oxobutanoate hydroxymethyltransferase from Enterobacter sp. (strain 638).